A 475-amino-acid polypeptide reads, in one-letter code: uncharacterized protein (475 aa).

The interval 42–292 (NLQNSLTGKT…NTRKGQRHNN (251 aa)) is disordered. 2 stretches are compositionally biased toward basic and acidic residues: residues 59–72 (EANHTSSDKSKSED) and 119–134 (IAEKQVEDRKLSDDSQ). Composition is skewed to polar residues over residues 150-159 (ITPNFTHTPI) and 220-242 (NNTFGSQTVSSANGKEVPQTSED). Positions 243-263 (SSSQAPHHSSSSGHAPSQQGG) are enriched in low complexity. Residues 277 to 289 (FHHKGRNTRKGQR) are compositionally biased toward basic residues. The 90-residue stretch at 319–408 (NPYLCDVQAF…MSIKVRRKET (90 aa)) folds into the HTH La-type RNA-binding domain. Phosphothreonine is present on Thr-408. Residue Ser-410 is modified to Phosphoserine.

It localises to the cytoplasm. This is an uncharacterized protein from Schizosaccharomyces pombe (strain 972 / ATCC 24843) (Fission yeast).